Here is a 380-residue protein sequence, read N- to C-terminus: Cytochrome b (380 aa).

A run of 4 helical transmembrane segments spans residues 34–54 (FGSL…LLAM), 78–99 (WLIR…YLHI), 114–134 (WNTG…GYVL), and 179–199 (FFAL…IHLT). Positions 84 and 98 each coordinate heme b. Heme b-binding residues include histidine 183 and histidine 197. A ubiquinone is bound at residue histidine 202. 4 helical membrane-spanning segments follow: residues 227-247 (LKDI…ALFS), 289-309 (LGGV…PFLH), 321-341 (LSQL…WVGS), and 348-368 (FIII…ILFP).

This sequence belongs to the cytochrome b family. As to quaternary structure, the cytochrome bc1 complex contains 11 subunits: 3 respiratory subunits (MT-CYB, CYC1 and UQCRFS1), 2 core proteins (UQCRC1 and UQCRC2) and 6 low-molecular weight proteins (UQCRH/QCR6, UQCRB/QCR7, UQCRQ/QCR8, UQCR10/QCR9, UQCR11/QCR10 and a cleavage product of UQCRFS1). This cytochrome bc1 complex then forms a dimer. Requires heme b as cofactor.

It is found in the mitochondrion inner membrane. Component of the ubiquinol-cytochrome c reductase complex (complex III or cytochrome b-c1 complex) that is part of the mitochondrial respiratory chain. The b-c1 complex mediates electron transfer from ubiquinol to cytochrome c. Contributes to the generation of a proton gradient across the mitochondrial membrane that is then used for ATP synthesis. This chain is Cytochrome b (MT-CYB), found in Macronectes halli (Hall's giant petrel).